The primary structure comprises 132 residues: Arsenate reductase 1 (132 aa).

Catalysis depends on nucleophile residues Cys10, Cys82, and Cys89. Disulfide bonds link Cys10/Cys82 and Cys82/Cys89.

Belongs to the low molecular weight phosphotyrosine protein phosphatase family. Thioredoxin-coupled ArsC subfamily.

It localises to the cytoplasm. The catalysed reaction is arsenate + [thioredoxin]-dithiol + H(+) = arsenite + [thioredoxin]-disulfide + H2O. Catalyzes the reduction of arsenate [As(V)] to arsenite [As(III)]. This Staphylococcus epidermidis (strain ATCC 35984 / DSM 28319 / BCRC 17069 / CCUG 31568 / BM 3577 / RP62A) protein is Arsenate reductase 1.